We begin with the raw amino-acid sequence, 338 residues long: Anthranilate phosphoribosyltransferase (338 aa).

5-phospho-alpha-D-ribose 1-diphosphate is bound by residues Gly78, Gly81–Asp82, Thr86, Asn88–Thr91, Lys106–Ser114, and Ser118. Gly78 lines the anthranilate pocket. Ser90 lines the Mg(2+) pocket. Asn109 contributes to the anthranilate binding site. An anthranilate-binding site is contributed by Arg164. Asp223 and Glu224 together coordinate Mg(2+).

It belongs to the anthranilate phosphoribosyltransferase family. In terms of assembly, homodimer. Requires Mg(2+) as cofactor.

The enzyme catalyses N-(5-phospho-beta-D-ribosyl)anthranilate + diphosphate = 5-phospho-alpha-D-ribose 1-diphosphate + anthranilate. It functions in the pathway amino-acid biosynthesis; L-tryptophan biosynthesis; L-tryptophan from chorismate: step 2/5. In terms of biological role, catalyzes the transfer of the phosphoribosyl group of 5-phosphorylribose-1-pyrophosphate (PRPP) to anthranilate to yield N-(5'-phosphoribosyl)-anthranilate (PRA). In Bacillus licheniformis (strain ATCC 14580 / DSM 13 / JCM 2505 / CCUG 7422 / NBRC 12200 / NCIMB 9375 / NCTC 10341 / NRRL NRS-1264 / Gibson 46), this protein is Anthranilate phosphoribosyltransferase.